The following is a 369-amino-acid chain: Cyanuric acid amidohydrolase (369 aa).

Residues 1–100 (MPRRAEILRL…HWLVIAAREA (100 aa)) are RU A. Substrate is bound by residues Arg53 and 81–82 (SG). Residues 106–242 (ALAVGQARTP…HEVVVMGMSP (137 aa)) form an RU B region. Lys155 is an active-site residue. Residues Arg187 and 225–226 (SA) each bind substrate. The active-site Nucleophile is the Ser225. The interval 248 to 369 (LVIDHAVMAD…ARRSGAAGPA (122 aa)) is RU C. Residue Glu296 coordinates Mg(2+). Substrate is bound by residues Arg323 and 342-343 (SG). Residues Ala345, Gln348, Gly349, Pro350, and Gly353 each contribute to the Mg(2+) site.

Belongs to the cyclic amide hydrolase (CyAH) family. Homotetramer.

The enzyme catalyses cyanurate + H2O = 1-carboxybiuret + H(+). It functions in the pathway xenobiotic degradation; atrazine degradation; biuret from cyanurate: step 1/1. With respect to regulation, inhibited by barbituric acid. Its function is as follows. Responsible for the hydrolysis of cyanuric acid, an intermediate formed during catabolism of s-triazine based compounds in herbicides such as atrazine and polymers such as melamine. Catalyzes the hydrolytic opening of the s-triazine ring of cyanuric acid (2,4,6-trihydroxy-s-triazine) to yield carbon dioxide and carboxybiuret, which spontaneously decarboxylates to biuret. The polypeptide is Cyanuric acid amidohydrolase (Methylobacterium sp. (strain 4-46)).